Consider the following 398-residue polypeptide: Exodeoxyribonuclease 7 large subunit (398 aa).

Belongs to the XseA family. In terms of assembly, heterooligomer composed of large and small subunits.

The protein localises to the cytoplasm. It carries out the reaction Exonucleolytic cleavage in either 5'- to 3'- or 3'- to 5'-direction to yield nucleoside 5'-phosphates.. In terms of biological role, bidirectionally degrades single-stranded DNA into large acid-insoluble oligonucleotides, which are then degraded further into small acid-soluble oligonucleotides. The chain is Exodeoxyribonuclease 7 large subunit from Chlorobaculum tepidum (strain ATCC 49652 / DSM 12025 / NBRC 103806 / TLS) (Chlorobium tepidum).